Consider the following 220-residue polypeptide: Claudin-6 (220 aa).

The Cytoplasmic segment spans residues 1-7 (MASAGMQ). Residues 8–28 (ILGVVLTLLGWVNGLVSCALP) form a helical membrane-spanning segment. Topologically, residues 29–81 (MWKVTAFIGNSIVVAQVVWEGLWMSCVVQSTGQMQCKVYDSLLALPQDLQAAR) are extracellular. Residues 82 to 102 (ALCVIALLVALFGLLVYLAGA) form a helical membrane-spanning segment. The Cytoplasmic portion of the chain corresponds to 103-116 (KCTTCVEEKDSKAR). The helical transmembrane segment at 117-137 (LVLTSGIVFVISGVLTLIPVC) threads the bilayer. Residues 138 to 160 (WTAHAIIRDFYNPLVAEAQKREL) are Extracellular-facing. The chain crosses the membrane as a helical span at residues 161–181 (GASLYLGWAASGLLLLGGGLL). Topologically, residues 182–220 (CCTCPSGGSQGPSHYMARYSTSAPAISRGPSEYPTKNYV) are cytoplasmic. Phosphoserine is present on residues S201, S203, S208, and S212. The tract at residues 219–220 (YV) is interactions with TJP1, TJP2 and TJP3.

The protein belongs to the claudin family. As to quaternary structure, directly interacts with TJP1/ZO-1, TJP2/ZO-2 and TJP3/ZO-3. Interacts with CLDN1, CD81 and OCLN. Expressed in the liver, in peripheral blood mononuclear cells and hepatocarcinoma cell lines.

It localises to the cell junction. Its subcellular location is the tight junction. The protein resides in the cell membrane. In terms of biological role, plays a major role in tight junction-specific obliteration of the intercellular space. (Microbial infection) Acts as a receptor for hepatitis C virus (HCV) entry into hepatic cells. The polypeptide is Claudin-6 (CLDN6) (Homo sapiens (Human)).